Here is a 114-residue protein sequence, read N- to C-terminus: RutC family protein YoaB (114 aa).

This sequence belongs to the RutC family.

The sequence is that of RutC family protein YoaB (yoaB) from Escherichia coli O6:H1 (strain CFT073 / ATCC 700928 / UPEC).